The primary structure comprises 46 residues: Iota-conotoxin-like r11b (46 aa).

Residues Pro2 and Pro11 each carry the 4-hydroxyproline modification. Disulfide bonds link Cys5/Cys19, Cys12/Cys22, Cys18/Cys27, and Cys21/Cys38. At Pro29 the chain carries 4-hydroxyproline. A D-phenylalanine modification is found at Phe44.

The natural D-Phe form of the peptide is more potent than the synthetic L-Phe form. As to expression, expressed by the venom duct.

It is found in the secreted. In terms of biological role, iota-conotoxins bind to voltage-gated sodium channels (Nav) and act as agonists by shifting the voltage-dependence of activation to more hyperpolarized levels. Produces excitatory symptoms when injected intracranially into mice and is lethal at higher doses. Exposure to frog cutaneous pectoris induces spontaneous and repetitive action potentials. This effect is slowly reversible. Natural peptide (with D-Phe) is active on nerve, but not on muscle. Synthetic peptide (with L-Phe) is not active on both nerve and muscle. In Conus radiatus (Rayed cone), this protein is Iota-conotoxin-like r11b.